The chain runs to 509 residues: DNA nucleotidylexotransferase (509 aa).

Residues 1-24 form a disordered region; that stretch reads MDPPRASHLSPRKKRPRQTGALMA. Positions 11–17 match the Nuclear localization signal motif; it reads PRKKRPR. Residues 27–124 enclose the BRCT domain; that stretch reads PQDIKFQDLV…KPVEMTGKHQ (98 aa). Ser134 bears the Phosphoserine mark. The tract at residues 151–509 is mediates interaction with DNTTIP2; it reads SQYACQRRTT…DYIEPWERNA (359 aa). The interval 258–262 is involved in DNA binding; sequence VGLKT. Residues 333 to 338 and 342 to 345 each bind a 2'-deoxyribonucleoside 5'-triphosphate; these read GFRRGK and HDVD. The Mg(2+) site is built by Asp343, Asp345, and Asp433. 448 to 449 contributes to the a 2'-deoxyribonucleoside 5'-triphosphate binding site; that stretch reads GW.

This sequence belongs to the DNA polymerase type-X family. As to quaternary structure, interacts with PRP19 and DNTTIP1. Forms a ternary complex with DNTTIP2 and core histone. Released from this complex by PCNA. Interacts with TRERF1. Mg(2+) serves as cofactor.

The protein resides in the nucleus. The enzyme catalyses DNA(n) + a 2'-deoxyribonucleoside 5'-triphosphate = DNA(n+1) + diphosphate. Functionally, template-independent DNA polymerase which catalyzes the random addition of deoxynucleoside 5'-triphosphate to the 3'-end of a DNA initiator. One of the in vivo functions of this enzyme is the addition of nucleotides at the junction (N region) of rearranged Ig heavy chain and T-cell receptor gene segments during the maturation of B- and T-cells. This chain is DNA nucleotidylexotransferase (DNTT), found in Homo sapiens (Human).